The following is a 263-amino-acid chain: Putative cysteine-rich repeat secretory protein 31 (263 aa).

A signal peptide spans 1 to 32; sequence MHNSYSLSKRLVLVLFLAVVATQLFLIRNVSS. Gnk2-homologous domains follow at residues 39–141 and 146–260; these read YLHH…AIEV and YDNN…FYPF.

This sequence belongs to the cysteine-rich repeat secretory protein family.

Its subcellular location is the secreted. In Arabidopsis thaliana (Mouse-ear cress), this protein is Putative cysteine-rich repeat secretory protein 31 (CRRSP31).